A 54-amino-acid chain; its full sequence is Ovomucoid (54 aa).

The 51-residue stretch at 4–54 (VDCSDYPKPACRMEYMPLCGSDNKTYGNKCNFCNAVVDSNGTLTLSHFGKC) folds into the Kazal-like domain. 3 disulfide bridges follow: Cys6–Cys36, Cys14–Cys33, and Cys22–Cys54. N-linked (GlcNAc...) asparagine glycosylation occurs at Asn43.

The protein resides in the secreted. The protein is Ovomucoid of Cereopsis novaehollandiae (Cape Barren goose).